A 642-amino-acid chain; its full sequence is Conserved oligomeric Golgi complex subunit 6 (642 aa).

The protein belongs to the COG6 family. Component of the conserved oligomeric Golgi complex which is composed of eight different subunits and is required for normal Golgi morphology and localization.

It is found in the golgi apparatus membrane. Required for normal Golgi function. This is Conserved oligomeric Golgi complex subunit 6 (cogc-6) from Caenorhabditis elegans.